We begin with the raw amino-acid sequence, 494 residues long: Rho GTPase-activating protein 19 (494 aa).

Position 2 is an N-acetylalanine (alanine 2). Phosphoserine is present on residues serine 7 and serine 31. Residues 102–308 (MSLKRKEKGV…FMIKHSQKLF (207 aa)) enclose the Rho-GAP domain. A disordered region spans residues 399–451 (QSLTQTPGREPSTPRVQKRARSRSFSGLIKRKVLGSQMTSEKKNSSPAPESVA). Phosphoserine is present on residues serine 422, serine 438, and serine 470. At threonine 478 the chain carries Phosphothreonine.

Functionally, GTPase activator for the Rho-type GTPases by converting them to an inactive GDP-bound state. In Mus musculus (Mouse), this protein is Rho GTPase-activating protein 19 (Arhgap19).